The chain runs to 311 residues: Cathepsin B (311 aa).

Positions 1–19 are cleaved as a signal peptide; that stretch reads MRVLLSLVVILFIINSAFA. The propeptide occupies 20–78; the sequence is VKINIGRPTKSHKTIHHETWVEEQTDQFDNIKVGQLLGFKRSPNRPKLQIKSYDPLGVQ. An N-linked (GlcNAc...) asparagine glycan is attached at asparagine 91. Cystine bridges form between cysteine 92–cysteine 121, cysteine 104–cysteine 145, cysteine 138–cysteine 191, cysteine 167–cysteine 195, and cysteine 175–cysteine 182. The active site involves cysteine 107. Asparagine 198 is a glycosylation site (N-linked (GlcNAc...) asparagine). Residues histidine 261 and asparagine 281 contribute to the active site. The N-linked (GlcNAc...) asparagine glycan is linked to asparagine 290.

The protein belongs to the peptidase C1 family.

The protein resides in the lysosome. The catalysed reaction is Hydrolysis of proteins with broad specificity for peptide bonds. Preferentially cleaves -Arg-Arg-|-Xaa bonds in small molecule substrates (thus differing from cathepsin L). In addition to being an endopeptidase, shows peptidyl-dipeptidase activity, liberating C-terminal dipeptides.. In terms of biological role, thiol protease which is believed to participate in intracellular degradation and turnover of proteins. This chain is Cathepsin B (ctsB), found in Dictyostelium discoideum (Social amoeba).